A 348-amino-acid chain; its full sequence is Dihydroorotase (348 aa).

The Zn(2+) site is built by His17 and His19. Residues 19–21 (HLR) and Asn45 contribute to the substrate site. 3 residues coordinate Zn(2+): Lys103, His140, and His178. Residue Lys103 is modified to N6-carboxylysine. His140 serves as a coordination point for substrate. Leu223 contributes to the substrate binding site. Asp251 is a Zn(2+) binding site. Asp251 is a catalytic residue. Positions 255 and 267 each coordinate substrate.

This sequence belongs to the metallo-dependent hydrolases superfamily. DHOase family. Class II DHOase subfamily. As to quaternary structure, homodimer. Requires Zn(2+) as cofactor.

The enzyme catalyses (S)-dihydroorotate + H2O = N-carbamoyl-L-aspartate + H(+). It functions in the pathway pyrimidine metabolism; UMP biosynthesis via de novo pathway; (S)-dihydroorotate from bicarbonate: step 3/3. Functionally, catalyzes the reversible cyclization of carbamoyl aspartate to dihydroorotate. The protein is Dihydroorotase of Shigella boydii serotype 18 (strain CDC 3083-94 / BS512).